Reading from the N-terminus, the 530-residue chain is Phosphoenolpyruvate carboxykinase (ATP) (530 aa).

Positions 58, 195, and 201 each coordinate substrate. ATP is bound by residues K201, H220, and 236 to 244 (GLSGTGKTT). Residues K201 and H220 each contribute to the Mn(2+) site. D257 lines the Mn(2+) pocket. Residues E285, R321, 440–441 (RI), and T446 contribute to the ATP site. R321 is a binding site for substrate.

It belongs to the phosphoenolpyruvate carboxykinase (ATP) family. Mn(2+) is required as a cofactor.

It localises to the cytoplasm. The enzyme catalyses oxaloacetate + ATP = phosphoenolpyruvate + ADP + CO2. The protein operates within carbohydrate biosynthesis; gluconeogenesis. Functionally, involved in the gluconeogenesis. Catalyzes the conversion of oxaloacetate (OAA) to phosphoenolpyruvate (PEP) through direct phosphoryl transfer between the nucleoside triphosphate and OAA. This is Phosphoenolpyruvate carboxykinase (ATP) from Staphylococcus haemolyticus (strain JCSC1435).